The primary structure comprises 302 residues: Sulfate adenylyltransferase subunit 2 (302 aa).

The protein belongs to the PAPS reductase family. CysD subfamily. As to quaternary structure, heterodimer composed of CysD, the smaller subunit, and CysN.

The catalysed reaction is sulfate + ATP + H(+) = adenosine 5'-phosphosulfate + diphosphate. The protein operates within sulfur metabolism; hydrogen sulfide biosynthesis; sulfite from sulfate: step 1/3. Its function is as follows. With CysN forms the ATP sulfurylase (ATPS) that catalyzes the adenylation of sulfate producing adenosine 5'-phosphosulfate (APS) and diphosphate, the first enzymatic step in sulfur assimilation pathway. APS synthesis involves the formation of a high-energy phosphoric-sulfuric acid anhydride bond driven by GTP hydrolysis by CysN coupled to ATP hydrolysis by CysD. The chain is Sulfate adenylyltransferase subunit 2 from Pectobacterium carotovorum subsp. carotovorum (strain PC1).